A 539-amino-acid polypeptide reads, in one-letter code: Glucose-6-phosphate isomerase (539 aa).

Glutamate 353 acts as the Proton donor in catalysis. Residues histidine 384 and lysine 505 contribute to the active site.

The protein belongs to the GPI family.

The protein localises to the cytoplasm. The catalysed reaction is alpha-D-glucose 6-phosphate = beta-D-fructose 6-phosphate. The protein operates within carbohydrate biosynthesis; gluconeogenesis. It functions in the pathway carbohydrate degradation; glycolysis; D-glyceraldehyde 3-phosphate and glycerone phosphate from D-glucose: step 2/4. Catalyzes the reversible isomerization of glucose-6-phosphate to fructose-6-phosphate. The protein is Glucose-6-phosphate isomerase of Ralstonia nicotianae (strain ATCC BAA-1114 / GMI1000) (Ralstonia solanacearum).